The sequence spans 341 residues: 4-(gamma-L-glutamylamino)butanoyl-[BtrI acyl-carrier protein] monooxygenase BtrO (341 aa).

Belongs to the bacterial luciferase oxidoreductase family.

It catalyses the reaction 4-(gamma-L-glutamylamino)butanoyl-[BtrI ACP] + FMNH2 + O2 = 4-(gamma-L-glutamylamino)-(2S)-2-hydroxybutanoyl-[BtrI ACP] + FMN + H2O + H(+). It functions in the pathway antibiotic biosynthesis; butirosin biosynthesis. Its function is as follows. Monooxygenase component of a two-component system involved in the biosynthesis of the side chain of the aminoglycoside antibiotics in the biosynthetic pathway of butirosin. Together with BtrV, mediates hydroxylation of gamma-L-Glu-GABA-S-BtrI. Not able to hydroxylate free substrates, activation by the acyl-carrier protein is mandatory. Octanoyl-S-[BtrI acyl-carrier protein] is also accepted as substrate. This Niallia circulans (Bacillus circulans) protein is 4-(gamma-L-glutamylamino)butanoyl-[BtrI acyl-carrier protein] monooxygenase BtrO (btrO).